Consider the following 240-residue polypeptide: Uridylate kinase (240 aa).

An ATP-binding site is contributed by 13 to 16 (KLSG). Residues 21-26 (GEKGFG) form an involved in allosteric activation by GTP region. Residue glycine 55 participates in UMP binding. ATP contacts are provided by glycine 56 and arginine 60. UMP-binding positions include aspartate 75 and 136–143 (IGNPYFST). Residues asparagine 164, tyrosine 170, and aspartate 173 each coordinate ATP.

This sequence belongs to the UMP kinase family. Homohexamer.

It localises to the cytoplasm. The enzyme catalyses UMP + ATP = UDP + ADP. Its pathway is pyrimidine metabolism; CTP biosynthesis via de novo pathway; UDP from UMP (UMPK route): step 1/1. Its activity is regulated as follows. Allosterically activated by GTP. Inhibited by UTP. Functionally, catalyzes the reversible phosphorylation of UMP to UDP. The sequence is that of Uridylate kinase from Staphylococcus aureus (strain Newman).